We begin with the raw amino-acid sequence, 223 residues long: Ribose-5-phosphate isomerase A (223 aa).

Residues 32–35, 83–86, and 96–99 each bind substrate; these read TGST, DGAD, and KGGG. The active-site Proton acceptor is the Glu-105. Lys-123 is a binding site for substrate.

Belongs to the ribose 5-phosphate isomerase family. In terms of assembly, homodimer.

The enzyme catalyses aldehydo-D-ribose 5-phosphate = D-ribulose 5-phosphate. It functions in the pathway carbohydrate degradation; pentose phosphate pathway; D-ribose 5-phosphate from D-ribulose 5-phosphate (non-oxidative stage): step 1/1. Functionally, catalyzes the reversible conversion of ribose-5-phosphate to ribulose 5-phosphate. The protein is Ribose-5-phosphate isomerase A of Acinetobacter baumannii (strain SDF).